Here is a 406-residue protein sequence, read N- to C-terminus: Arginine deiminase (406 aa).

Cys-396 acts as the Amidino-cysteine intermediate in catalysis.

It belongs to the arginine deiminase family.

Its subcellular location is the cytoplasm. The catalysed reaction is L-arginine + H2O = L-citrulline + NH4(+). The protein operates within amino-acid degradation; L-arginine degradation via ADI pathway; carbamoyl phosphate from L-arginine: step 1/2. The polypeptide is Arginine deiminase (Aliivibrio fischeri (strain MJ11) (Vibrio fischeri)).